The primary structure comprises 79 residues: ATP synthase subunit c (79 aa).

2 consecutive transmembrane segments (helical) span residues 11 to 31 (IAVA…IGIL) and 59 to 79 (LVDA…FAVI).

This sequence belongs to the ATPase C chain family. F-type ATPases have 2 components, F(1) - the catalytic core - and F(0) - the membrane proton channel. F(1) has five subunits: alpha(3), beta(3), gamma(1), delta(1), epsilon(1). F(0) has three main subunits: a(1), b(2) and c(10-14). The alpha and beta chains form an alternating ring which encloses part of the gamma chain. F(1) is attached to F(0) by a central stalk formed by the gamma and epsilon chains, while a peripheral stalk is formed by the delta and b chains.

Its subcellular location is the cell membrane. Its function is as follows. F(1)F(0) ATP synthase produces ATP from ADP in the presence of a proton or sodium gradient. F-type ATPases consist of two structural domains, F(1) containing the extramembraneous catalytic core and F(0) containing the membrane proton channel, linked together by a central stalk and a peripheral stalk. During catalysis, ATP synthesis in the catalytic domain of F(1) is coupled via a rotary mechanism of the central stalk subunits to proton translocation. In terms of biological role, key component of the F(0) channel; it plays a direct role in translocation across the membrane. A homomeric c-ring of between 10-14 subunits forms the central stalk rotor element with the F(1) delta and epsilon subunits. This Buchnera aphidicola subsp. Baizongia pistaciae (strain Bp) protein is ATP synthase subunit c.